Consider the following 296-residue polypeptide: Protoheme IX farnesyltransferase (296 aa).

At 1–9 (MMFKQYLQV) the chain is on the cytoplasmic side. Residues 10–28 (TKPGIIFGNLISVIGGFLL) traverse the membrane as a helical segment. Over 29 to 37 (ASKGSIDYP) the chain is Periplasmic. Residues 38 to 56 (LFIYTLVGVSLVVASGCVF) form a helical membrane-spanning segment. Topologically, residues 57–78 (NNFIDRDIDRKMERTKNRVLVK) are cytoplasmic. The helical transmembrane segment at 79 to 97 (GLISPGVSLVYATLLGIAG) threads the bilayer. The Periplasmic portion of the chain corresponds to 98–107 (FMLLWFGANP). Residues 108 to 126 (LACWLGVMGFVVYVGIYSL) form a helical membrane-spanning segment. Over 127–197 (YMKRHSVYGT…YQAANIPVLP (71 aa)) the chain is Cytoplasmic. Residues 198–216 (VVKGISVAKNHITLYIIAF) form a helical membrane-spanning segment. Residues 217-228 (AVATLMLTLGGY) are Periplasmic-facing. Residues 229-247 (AGYKYLVVAAAVSVWWLGM) form a helical membrane-spanning segment. Residues 248 to 268 (ALRGYKVEDDKVWARKLFGFS) are Cytoplasmic-facing. The chain crosses the membrane as a helical span at residues 269-287 (IIAITALSIMMSVDFMVPN). Over 288 to 296 (SQSLLTYVW) the chain is Periplasmic.

Belongs to the UbiA prenyltransferase family. Protoheme IX farnesyltransferase subfamily.

The protein localises to the cell inner membrane. The enzyme catalyses heme b + (2E,6E)-farnesyl diphosphate + H2O = Fe(II)-heme o + diphosphate. Its pathway is porphyrin-containing compound metabolism; heme O biosynthesis; heme O from protoheme: step 1/1. Its function is as follows. Converts heme B (protoheme IX) to heme O by substitution of the vinyl group on carbon 2 of heme B porphyrin ring with a hydroxyethyl farnesyl side group. In Salmonella arizonae (strain ATCC BAA-731 / CDC346-86 / RSK2980), this protein is Protoheme IX farnesyltransferase.